The chain runs to 88 residues: Phosphocarrier protein HPr (88 aa).

Residues 1–88 (MAEKTFKVVS…DTLAKEGLAE (88 aa)) enclose the HPr domain. Phosphoserine is present on S12. H15 acts as the Pros-phosphohistidine intermediate in catalysis. A Phosphoserine; by HPrK/P modification is found at S46.

The protein belongs to the HPr family.

It localises to the cytoplasm. Phosphorylation on Ser-46 inhibits the phosphoryl transfer from enzyme I to HPr. In terms of biological role, general (non sugar-specific) component of the phosphoenolpyruvate-dependent sugar phosphotransferase system (sugar PTS). This major carbohydrate active-transport system catalyzes the phosphorylation of incoming sugar substrates concomitantly with their translocation across the cell membrane. The phosphoryl group from phosphoenolpyruvate (PEP) is transferred to the phosphoryl carrier protein HPr by enzyme I. Phospho-HPr then transfers it to the PTS EIIA domain. Its function is as follows. P-Ser-HPr interacts with the catabolite control protein A (CcpA), forming a complex that binds to DNA at the catabolite response elements cre, operator sites preceding a large number of catabolite-regulated genes. Thus, P-Ser-HPr is a corepressor in carbon catabolite repression (CCR), a mechanism that allows bacteria to coordinate and optimize the utilization of available carbon sources. P-Ser-HPr also plays a role in inducer exclusion, in which it probably interacts with several non-PTS permeases and inhibits their transport activity. The protein is Phosphocarrier protein HPr (ptsH) of Geobacillus stearothermophilus (Bacillus stearothermophilus).